The primary structure comprises 389 residues: COP9 signalosome complex subunit 11 (389 aa).

The PCI domain occupies 143-312 (QLIIDIPNLV…ILYQKFDPQM (170 aa)).

In terms of assembly, component of a COP9 signalosome-like (CSN) complex.

Its subcellular location is the cytoplasm. It is found in the nucleus. Functionally, component of the COP9 signalosome (CSN) complex that acts as an regulator of the ubiquitin (Ubl) conjugation pathway by mediating the deneddylation of the cullin subunit of SCF-type E3 ubiquitin-protein ligase complexes The CSN complex is involved in the regulation of the mating pheromone response. PCI8 may also be involved in transcriptional and translational control. The protein is COP9 signalosome complex subunit 11 (PCI8) of Kluyveromyces lactis (strain ATCC 8585 / CBS 2359 / DSM 70799 / NBRC 1267 / NRRL Y-1140 / WM37) (Yeast).